Consider the following 485-residue polypeptide: Glycogen synthase (485 aa).

An ADP-alpha-D-glucose-binding site is contributed by K17.

Belongs to the glycosyltransferase 1 family. Bacterial/plant glycogen synthase subfamily.

The enzyme catalyses [(1-&gt;4)-alpha-D-glucosyl](n) + ADP-alpha-D-glucose = [(1-&gt;4)-alpha-D-glucosyl](n+1) + ADP + H(+). Its pathway is glycan biosynthesis; glycogen biosynthesis. Synthesizes alpha-1,4-glucan chains using ADP-glucose. The chain is Glycogen synthase from Novosphingobium aromaticivorans (strain ATCC 700278 / DSM 12444 / CCUG 56034 / CIP 105152 / NBRC 16084 / F199).